The following is a 269-amino-acid chain: Thymidylate synthase (269 aa).

Arginine 26 serves as a coordination point for dUMP. Histidine 56 is a binding site for (6R)-5,10-methylene-5,6,7,8-tetrahydrofolate. 131–132 (RR) serves as a coordination point for dUMP. Cysteine 151 (nucleophile) is an active-site residue. DUMP-binding positions include 171–174 (RSAD), asparagine 182, and 212–214 (HIY). Aspartate 174 lines the (6R)-5,10-methylene-5,6,7,8-tetrahydrofolate pocket. Alanine 268 is a (6R)-5,10-methylene-5,6,7,8-tetrahydrofolate binding site.

It belongs to the thymidylate synthase family. Bacterial-type ThyA subfamily. In terms of assembly, homodimer.

The protein resides in the cytoplasm. The catalysed reaction is dUMP + (6R)-5,10-methylene-5,6,7,8-tetrahydrofolate = 7,8-dihydrofolate + dTMP. Its pathway is pyrimidine metabolism; dTTP biosynthesis. In terms of biological role, catalyzes the reductive methylation of 2'-deoxyuridine-5'-monophosphate (dUMP) to 2'-deoxythymidine-5'-monophosphate (dTMP) while utilizing 5,10-methylenetetrahydrofolate (mTHF) as the methyl donor and reductant in the reaction, yielding dihydrofolate (DHF) as a by-product. This enzymatic reaction provides an intracellular de novo source of dTMP, an essential precursor for DNA biosynthesis. This chain is Thymidylate synthase, found in Leifsonia xyli subsp. xyli (strain CTCB07).